A 416-amino-acid polypeptide reads, in one-letter code: Tyrosine--tRNA ligase (416 aa).

Residue Tyr-40 coordinates L-tyrosine. The short motif at 45–54 is the 'HIGH' region element; sequence ATAKSLHVGS. Tyr-177 and Gln-181 together coordinate L-tyrosine. The 'KMSKS' region signature appears at 237-241; it reads KMGKS. Lys-240 contributes to the ATP binding site. Residues 351–415 enclose the S4 RNA-binding domain; that stretch reads ISIVQLIVKS…GKKRHAMVQL (65 aa).

The protein belongs to the class-I aminoacyl-tRNA synthetase family. TyrS type 1 subfamily. As to quaternary structure, homodimer.

Its subcellular location is the cytoplasm. The catalysed reaction is tRNA(Tyr) + L-tyrosine + ATP = L-tyrosyl-tRNA(Tyr) + AMP + diphosphate + H(+). Catalyzes the attachment of tyrosine to tRNA(Tyr) in a two-step reaction: tyrosine is first activated by ATP to form Tyr-AMP and then transferred to the acceptor end of tRNA(Tyr). The polypeptide is Tyrosine--tRNA ligase (Roseobacter denitrificans (strain ATCC 33942 / OCh 114) (Erythrobacter sp. (strain OCh 114))).